A 683-amino-acid polypeptide reads, in one-letter code: Receptor-like serine/threonine-protein kinase At2g45590 (683 aa).

Residues 1–21 (MPSRLSPPDIPPLQPTPTVSD) form a disordered region. Over 1 to 30 (MPSRLSPPDIPPLQPTPTVSDGHHRFQTLP) the chain is Extracellular. Residues 31 to 51 (LIIAGSLTLTGVLLILVTLLI) form a helical membrane-spanning segment. The Cytoplasmic segment spans residues 52 to 683 (YRRLYRNRTA…FPFKSRKKAR (632 aa)). Residues 92–664 (FSESTHLGHG…GVSEPPHLPF (573 aa)) form the Protein kinase domain. ATP contacts are provided by residues 98–106 (LGHGGFGSV) and Lys-121. Asp-223 (proton acceptor) is an active-site residue. The tract at residues 406–436 (ERPSNNKEWINNGDGSSSVSKKKKKEKKRKP) is disordered. The span at 411-424 (NKEWINNGDGSSSV) shows a compositional bias: polar residues. The segment covering 425–436 (SKKKKKEKKRKP) has biased composition (basic residues).

This sequence belongs to the protein kinase superfamily. Ser/Thr protein kinase family.

Its subcellular location is the cell membrane. The catalysed reaction is L-seryl-[protein] + ATP = O-phospho-L-seryl-[protein] + ADP + H(+). It catalyses the reaction L-threonyl-[protein] + ATP = O-phospho-L-threonyl-[protein] + ADP + H(+). This is Receptor-like serine/threonine-protein kinase At2g45590 from Arabidopsis thaliana (Mouse-ear cress).